We begin with the raw amino-acid sequence, 64 residues long: Small ribosomal subunit protein bS21 (64 aa).

It belongs to the bacterial ribosomal protein bS21 family.

This Oenococcus oeni (strain ATCC BAA-331 / PSU-1) protein is Small ribosomal subunit protein bS21.